The chain runs to 198 residues: MNASLRTDDVMRYQDARFQTLAAKLLPTQYLVVDDTTALTTTLGSCVAACLRDPVLKIGGMNHFLLPEGNAGDGAPARYGSYAMELLINDMLKRGAHRKRIEAKVFGGANVLKGFTSNPVGTRNAEFVRQYLQAEHIPIIAEDLCGIHPRKIWFFADTGRVVVQRLPHAHEAEVAATESAVRARLSKAPVTGGVELFE.

Belongs to the CheD family.

The catalysed reaction is L-glutaminyl-[protein] + H2O = L-glutamyl-[protein] + NH4(+). Its function is as follows. Probably deamidates glutamine residues to glutamate on methyl-accepting chemotaxis receptors (MCPs), playing an important role in chemotaxis. This chain is Probable chemoreceptor glutamine deamidase CheD, found in Stenotrophomonas maltophilia (strain K279a).